A 336-amino-acid chain; its full sequence is Nicotinate-nucleotide--dimethylbenzimidazole phosphoribosyltransferase (336 aa).

The Proton acceptor role is filled by Glu-304.

This sequence belongs to the CobT family.

It carries out the reaction 5,6-dimethylbenzimidazole + nicotinate beta-D-ribonucleotide = alpha-ribazole 5'-phosphate + nicotinate + H(+). Its pathway is nucleoside biosynthesis; alpha-ribazole biosynthesis; alpha-ribazole from 5,6-dimethylbenzimidazole: step 1/2. Catalyzes the synthesis of alpha-ribazole-5'-phosphate from nicotinate mononucleotide (NAMN) and 5,6-dimethylbenzimidazole (DMB). In Mesorhizobium japonicum (strain LMG 29417 / CECT 9101 / MAFF 303099) (Mesorhizobium loti (strain MAFF 303099)), this protein is Nicotinate-nucleotide--dimethylbenzimidazole phosphoribosyltransferase.